The sequence spans 255 residues: Octanoyltransferase (255 aa).

The tract at residues 1 to 21 is disordered; the sequence is MCATPVSPSPESPRSAQAGAA. The BPL/LPL catalytic domain occupies 56–242; the sequence is FETSDEIWLV…SLIANIDGIP (187 aa). Substrate is bound by residues 96 to 103, 173 to 175, and 186 to 188; these read RGGQITYH, ALG, and GVS. The Acyl-thioester intermediate role is filled by C204.

The protein belongs to the LipB family.

Its subcellular location is the cytoplasm. It carries out the reaction octanoyl-[ACP] + L-lysyl-[protein] = N(6)-octanoyl-L-lysyl-[protein] + holo-[ACP] + H(+). It participates in protein modification; protein lipoylation via endogenous pathway; protein N(6)-(lipoyl)lysine from octanoyl-[acyl-carrier-protein]: step 1/2. In terms of biological role, catalyzes the transfer of endogenously produced octanoic acid from octanoyl-acyl-carrier-protein onto the lipoyl domains of lipoate-dependent enzymes. Lipoyl-ACP can also act as a substrate although octanoyl-ACP is likely to be the physiological substrate. In Paraburkholderia phymatum (strain DSM 17167 / CIP 108236 / LMG 21445 / STM815) (Burkholderia phymatum), this protein is Octanoyltransferase.